A 433-amino-acid polypeptide reads, in one-letter code: Glutamate-1-semialdehyde 2,1-aminomutase (433 aa).

Residue K267 is modified to N6-(pyridoxal phosphate)lysine.

The protein belongs to the class-III pyridoxal-phosphate-dependent aminotransferase family. HemL subfamily. Homodimer. Pyridoxal 5'-phosphate serves as cofactor.

The protein localises to the cytoplasm. It catalyses the reaction (S)-4-amino-5-oxopentanoate = 5-aminolevulinate. The protein operates within porphyrin-containing compound metabolism; protoporphyrin-IX biosynthesis; 5-aminolevulinate from L-glutamyl-tRNA(Glu): step 2/2. The polypeptide is Glutamate-1-semialdehyde 2,1-aminomutase (Syntrophobacter fumaroxidans (strain DSM 10017 / MPOB)).